A 123-amino-acid polypeptide reads, in one-letter code: MIQMQSTLDAADNSGARKVMCIKVLGGSHRRYAHIGDIIKVTVKEAIPRGKVKKGDVLKAVVVRTRKGVRRPDGSIIRFDRNACVLLNDTTEQPVGTRIFGPVTRELRNAKFMKIVSLAPEVL.

This sequence belongs to the universal ribosomal protein uL14 family. In terms of assembly, part of the 50S ribosomal subunit. Forms a cluster with proteins L3 and L19. In the 70S ribosome, L14 and L19 interact and together make contacts with the 16S rRNA in bridges B5 and B8.

Binds to 23S rRNA. Forms part of two intersubunit bridges in the 70S ribosome. This is Large ribosomal subunit protein uL14 from Aliivibrio fischeri (strain ATCC 700601 / ES114) (Vibrio fischeri).